Reading from the N-terminus, the 382-residue chain is Plasmid replication initiator protein TrfA (382 aa).

The interval 1-163 (MNRTFDRKAY…TARSALFTTR (163 aa)) is toxic in E.coli strain K12 / DH5-alpha; may be membrane-associated. A DNA-binding region (H-T-H motif) is located at residues 246–265 (SRLQATAMGFTSDRVGHLES). Residues 286–297 (VLIDEEIVVLFA) form a hydrophobic region (HR); required for membrane association region.

Forms a dimer in solution, binds DNA as a monomer. Both mononer and dimer of the short form interact with Hda (Dp).

It localises to the cell inner membrane. Functionally, required for initiation of plasmid DNA replication, along with host-derived DnaA and other host proteins. Both forms of the protein are capable of initiating plasmid replication in a number of Gram-negative bacteria. Binds to 8 17-base pair repeat sequences (iterons) in the RK2 minimal replication origin (oriV), opening the origin of replication. oriV opening does not absolutely require the presence of nucleotides; formation of open complex is somewhat enhanced by ATP or ATP gamma S, while DnaA or HU is required for full opening. Also involved in plasmid copy number control, promoting intermolecular coupling of protein bound iterons at oriV, which inhibits replication initiation. In Escherichia coli, this protein is Plasmid replication initiator protein TrfA (trfA).